The chain runs to 82 residues: Putative membrane protein insertion efficiency factor (82 aa).

Belongs to the UPF0161 family.

The protein resides in the cell inner membrane. In terms of biological role, could be involved in insertion of integral membrane proteins into the membrane. This Thermus thermophilus (strain ATCC BAA-163 / DSM 7039 / HB27) protein is Putative membrane protein insertion efficiency factor.